The sequence spans 78 residues: Large ribosomal subunit protein bL28 (78 aa).

The interval 1–25 (MARVCQVTGKRPMSGHHVSHANNKT) is disordered. The segment covering 13–25 (MSGHHVSHANNKT) has biased composition (basic residues).

This sequence belongs to the bacterial ribosomal protein bL28 family.

The chain is Large ribosomal subunit protein bL28 from Nitrosomonas eutropha (strain DSM 101675 / C91 / Nm57).